The sequence spans 135 residues: Small ribosomal subunit protein uS12 (135 aa).

Asp89 carries the post-translational modification 3-methylthioaspartic acid. The disordered stretch occupies residues Asn108–Lys135. The span at Thr111–Ala122 shows a compositional bias: basic residues. Residues Lys123 to Lys135 are compositionally biased toward basic and acidic residues.

It belongs to the universal ribosomal protein uS12 family. Part of the 30S ribosomal subunit. Contacts proteins S8 and S17. May interact with IF1 in the 30S initiation complex.

With S4 and S5 plays an important role in translational accuracy. Functionally, interacts with and stabilizes bases of the 16S rRNA that are involved in tRNA selection in the A site and with the mRNA backbone. Located at the interface of the 30S and 50S subunits, it traverses the body of the 30S subunit contacting proteins on the other side and probably holding the rRNA structure together. The combined cluster of proteins S8, S12 and S17 appears to hold together the shoulder and platform of the 30S subunit. This is Small ribosomal subunit protein uS12 from Helicobacter pylori (strain P12).